A 390-amino-acid chain; its full sequence is Argininosuccinate synthase (390 aa).

ATP is bound at residue 6-14; that stretch reads SYSGGLDTT. Position 83 (Y83) interacts with L-citrulline. ATP is bound at residue G113. L-aspartate-binding residues include T115, N119, and D120. N119 lines the L-citrulline pocket. Positions 123, 169, 178, 254, and 266 each coordinate L-citrulline.

The protein belongs to the argininosuccinate synthase family. Type 1 subfamily. In terms of assembly, homotetramer.

It is found in the cytoplasm. The enzyme catalyses L-citrulline + L-aspartate + ATP = 2-(N(omega)-L-arginino)succinate + AMP + diphosphate + H(+). It functions in the pathway amino-acid biosynthesis; L-arginine biosynthesis; L-arginine from L-ornithine and carbamoyl phosphate: step 2/3. The chain is Argininosuccinate synthase from Archaeoglobus fulgidus (strain ATCC 49558 / DSM 4304 / JCM 9628 / NBRC 100126 / VC-16).